Consider the following 334-residue polypeptide: Serpentine receptor class alpha-11 (334 aa).

At 1–23 (MTTNNPVCASDAHMEMYSSKLYT) the chain is on the extracellular side. The helical transmembrane segment at 24-44 (SALFLNLIIATTSMILTGFAI) threads the bilayer. Over 45-57 (QKLFMESIINIST) the chain is Cytoplasmic. Residues 58-80 (RMFLFCGLMCCSLHQTAYIVLRI) form a helical membrane-spanning segment. Residues 81–105 (QVIYQVFFKLSEPCNLYYPAIDCKY) lie on the Extracellular side of the membrane. The helical transmembrane segment at 106–126 (VTFSLVAGNTGMIFIQSAMTI) threads the bilayer. Residues 127-145 (DRIFATIFPKLWPKLKYWP) are Cytoplasmic-facing. Residues 146–166 (GVVLSILMIACNYANVQIIFW) traverse the membrane as a helical segment. At 167–191 (GDPLTEYVPTCGQFPSKSVNRFQTF) the chain is on the extracellular side. Residues 192–212 (LAIALYMSIAHMVINVIILYI) form a helical membrane-spanning segment. The Cytoplasmic portion of the chain corresponds to 213–239 (NVLQDRQQSKSFNVNQRYQSREALKSS). The chain crosses the membrane as a helical span at residues 240–260 (QAIFFLSMSQFFACLIYSVFT). Over 261 to 277 (KVFLEFQLNLSPLQSGL) the chain is Extracellular. The helical transmembrane segment at 278–298 (VLALSYTTPYACIAIPSLIIF) threads the bilayer. Residues 299 to 334 (TFRFIKNQRLRNINELRSQTETGDECMRKIAKIWEK) lie on the Cytoplasmic side of the membrane.

The protein belongs to the nematode receptor-like protein sra family. In terms of tissue distribution, expressed in interneurons AIY and AVB in L1 larvae. In adults, strong expression is seen in AIY and AIA but only weak expression in AVB.

The protein localises to the membrane. A G protein-coupled receptor required for olfactory imprinting a requisite in ordorant response such as benzaldehyde and isoamylalcohol. In Caenorhabditis elegans, this protein is Serpentine receptor class alpha-11 (sra-11).